The sequence spans 326 residues: MTAPQPHTITPPTPGSKIVLIGAGDVGIAYAYTLVNQGLTDHLAIIDLDERKTWGHVQDLNHAVPWSHHNTRVTVGTYEDCRDAAMVCICAGAAQKPGETRLDLVAKNTAIFKTIVGDVMSHGFNGIFLVASNPVDILSYATWKFSGMDSSRVIGSGTILDTARFRYALGRYFDLAPTSVHAYVIGEHGDTELPVLSAGSVAGTSIHHRLEMIGESADEDVDEIFVKTRDAAYEIIQAKGSTSFGIGMGLARITQAVFSNQDVVLPISTLLQGEYGFEDIYIGTPAVINRQGVRHAVELQLDSEEKERFDHSANVLRKVMGEAGLI.

NAD(+) is bound by residues Val26, Asp47, Lys52, Tyr78, and 92–93 (GA). Substrate contacts are provided by Gln95 and Arg101. NAD(+) contacts are provided by residues Thr114, 131–133 (ASN), and Ser156. 133 to 136 (NPVD) contacts substrate. 161–164 (DTAR) serves as a coordination point for substrate. Beta-D-fructose 1,6-bisphosphate-binding residues include Arg166 and His181. His188 serves as the catalytic Proton acceptor. Position 233 is a phosphotyrosine (Tyr233). Residue Thr242 coordinates substrate.

It belongs to the LDH/MDH superfamily. LDH family. Homotetramer.

The protein localises to the cytoplasm. It catalyses the reaction (S)-lactate + NAD(+) = pyruvate + NADH + H(+). The protein operates within fermentation; pyruvate fermentation to lactate; (S)-lactate from pyruvate: step 1/1. Its activity is regulated as follows. Allosterically activated by fructose 1,6-bisphosphate (FBP). Its function is as follows. Catalyzes the conversion of lactate to pyruvate. This Corynebacterium jeikeium (strain K411) protein is L-lactate dehydrogenase.